Consider the following 324-residue polypeptide: Zinc finger C2HC domain-containing protein 1A (324 aa).

The C2HC/C3H-type 1 zinc finger occupies 15–44 (ELLPCKICGRTFFPVALKKHGPICKKTATK). Zn(2+) is bound by residues Cys-19, Cys-22, His-34, and Cys-38. The tract at residues 43–83 (TKKRKTFDSSRQRAEGTDIPTVKPLKPRPEPPKKPSNWRRK) is disordered. Residues 48–58 (TFDSSRQRAEG) are compositionally biased toward basic and acidic residues. The segment at 118–147 (DYIQCPYCQRRFNENAADRHINFCKEQAAR) adopts a C2HC/C3H-type 2 zinc-finger fold. The Zn(2+) site is built by Cys-122, Cys-125, His-137, and Cys-141. Disordered regions lie at residues 150–224 (NKGK…LSPS) and 236–259 (NVKP…LTNK). Low complexity-rich tracts occupy residues 176–187 (SNSPGTASSGSS) and 196–215 (GKTV…SSLG). Position 222 is a phosphoserine (Ser-222). Thr-243 is modified (phosphothreonine). Ser-291 carries the phosphoserine modification.

The protein belongs to the ZC2HC1 family. The cofactor is Zn(2+).

The polypeptide is Zinc finger C2HC domain-containing protein 1A (ZC2HC1A) (Pongo abelii (Sumatran orangutan)).